We begin with the raw amino-acid sequence, 1971 residues long: Germinal-center associated nuclear protein (1971 aa).

Disordered stretches follow at residues M1–A50 and P214–S406. Polar residues predominate over residues G8–S29. R32 carries the post-translational modification Asymmetric dimethylarginine. The segment at F33–R335 is FG-repeats. 2 stretches are compositionally biased toward polar residues: residues L38 to A50 and P214 to N224. Over residues S232–S253 the composition is skewed to low complexity. Composition is skewed to basic and acidic residues over residues R288–P321 and K342–G359. Residues E414–S550 form a DNA primase region. At S424 the chain carries Phosphoserine. An N6-acetyllysine mark is found at K483 and K484. Phosphoserine occurs at positions 502, 531, and 550. Residues N768–L951 form the PCI domain. Positions H1124 to E1162 form a coiled coil. The tract at residues R1793–E1840 is disordered.

Belongs to the SAC3 family. As to quaternary structure, component of the nuclear pore complex (NPC)-associated TREX-2 complex (transcription and export complex 2), composed of at least GANP, 2 copies of ENY2, PCID2, SEM1/DSS1, and either centrin CETN2 or centrin CETN3. The TREX-2 complex also associates with ALYREF/ALY. Interacts with RNA polymerase II subunit POLR2A and with the transcription elongation factor SUPT5H/SPT5. Interacts (via FG-repeats) with NXF1; this interaction is not mediated by RNA. Interacts with nuclear envelope proteins NUP62, NUP153 and RANBP2/NUP358; interaction with NUP153 is required for full localization at the nuclear pore complex. Interacts with several RNA helicases, including DHX9, DDX21, and DDX39A/DDX39, and with DNA topoisomerase TOP2A. Directly interacts with AICDA/AID. Interacts with the glucocorticoid receptor NR3C1. Interacts with MCM3. Post-translationally, phosphorylation at Ser-502 is induced in B-cells by CD40-stimulation, but not by bacterial lipopolysaccharide (LPS). As to expression, expressed at low levels in lymphoid organs, including thymus, spleen and lymph nodes. Up-regulated in stimulated B-cells in spleen and Peyer's patch germinal centers (at protein level).

It is found in the cytoplasm. The protein localises to the nucleus. Its subcellular location is the nucleus envelope. It localises to the nuclear pore complex. The protein resides in the nucleoplasm. It is found in the chromosome. The catalysed reaction is L-lysyl-[histone] + acetyl-CoA = N(6)-acetyl-L-lysyl-[histone] + CoA + H(+). Functionally, as a component of the TREX-2 complex, involved in the export of mRNAs to the cytoplasm through the nuclear pores. Through the acetylation of histones, affects the assembly of nucleosomes at immunoglobulin variable region genes and promotes the recruitment and positioning of transcription complex to favor DNA cytosine deaminase AICDA/AID targeting, hence promoting somatic hypermutations. The polypeptide is Germinal-center associated nuclear protein (Mcm3ap) (Mus musculus (Mouse)).